Reading from the N-terminus, the 53-residue chain is UPF0391 membrane protein azo1750 (53 aa).

The next 2 helical transmembrane spans lie at 6–26 and 30–50; these read VIFLIIAIIAAVFGFGGIAAG and IAKILFYLFLVIFLVSLVLGM.

Belongs to the UPF0391 family.

The protein localises to the cell membrane. The polypeptide is UPF0391 membrane protein azo1750 (Azoarcus sp. (strain BH72)).